A 302-amino-acid polypeptide reads, in one-letter code: tRNA dimethylallyltransferase 1 (302 aa).

6–13 (GPTACGKT) lines the ATP pocket. 8-13 (TACGKT) contacts substrate. Interaction with substrate tRNA stretches follow at residues 31–34 (DSRQ) and 154–158 (QRAIR).

It belongs to the IPP transferase family. Monomer. Mg(2+) serves as cofactor.

It catalyses the reaction adenosine(37) in tRNA + dimethylallyl diphosphate = N(6)-dimethylallyladenosine(37) in tRNA + diphosphate. Functionally, catalyzes the transfer of a dimethylallyl group onto the adenine at position 37 in tRNAs that read codons beginning with uridine, leading to the formation of N6-(dimethylallyl)adenosine (i(6)A). The chain is tRNA dimethylallyltransferase 1 from Porphyromonas gingivalis (strain ATCC 33277 / DSM 20709 / CIP 103683 / JCM 12257 / NCTC 11834 / 2561).